A 102-amino-acid chain; its full sequence is Flagellar hook-basal body complex protein FliE (102 aa).

This sequence belongs to the FliE family.

It localises to the bacterial flagellum basal body. This chain is Flagellar hook-basal body complex protein FliE, found in Halalkalibacterium halodurans (strain ATCC BAA-125 / DSM 18197 / FERM 7344 / JCM 9153 / C-125) (Bacillus halodurans).